The primary structure comprises 72 residues: Lantibiotic Flvbeta.e (72 aa).

Positions 1–34 (MNNKEFNMEQFKKLAAVVSEDELDEMLDENVTGA) are cleaved as a propeptide — cleaved by FlvT. Residues 36-40 (SSIPC) constitute a cross-link (lanthionine (Ser-Cys); by FlvM2). Position 37 is a 2,3-didehydroalanine (Ser); by FlvM2 (S37). 2,3-didehydrobutyrine; by FlvM2 is present on residues T48 and T49. 3 consecutive cross-links (beta-methyllanthionine (Thr-Cys); by FlvM2) follow at residues 55 to 61 (TTGFDWC), 63 to 66 (TGAC), and 67 to 70 (TTSC).

Post-translationally, contains LL-lanthionine and DL-beta-methyllanthionine, when coepressed in E.coli with the flavecin synthetase FlvM2.

Its subcellular location is the secreted. In terms of biological role, lanthionine-containing peptide antibiotic (lantibiotic) that is probably active on Gram-positive bacteria, since its analog [Del1]Flvbeta.e shows antibacterial activity against Gram-positive bacteria. This activity is not synergistically enhanced by [Del2]Flvalpha.a, an analog of Flvalpha.a, which is encoded by the same operon than Flvbeta.e. The bactericidal activity of lantibiotics is based on depolarization of energized bacterial cytoplasmic membranes, initiated by the formation of aqueous transmembrane pores. The protein is Lantibiotic Flvbeta.e of Ruminococcus flavefaciens.